A 171-amino-acid chain; its full sequence is Small ribosomal subunit protein mS25 (171 aa).

It belongs to the mitochondrion-specific ribosomal protein mS25 family. Component of the mitochondrial ribosome small subunit (28S) which comprises a 12S rRNA and about 30 distinct proteins.

The protein resides in the mitochondrion. The chain is Small ribosomal subunit protein mS25 (Mrps25) from Rattus norvegicus (Rat).